The chain runs to 75 residues: Putative snRNP Sm-like protein (75 aa).

Residues 4-75 (RPLDVIHRSL…NVLAISPTEE (72 aa)) enclose the Sm domain.

It belongs to the snRNP Sm proteins family.

The polypeptide is Putative snRNP Sm-like protein (Pyrococcus abyssi (strain GE5 / Orsay)).